The chain runs to 118 residues: Large ribosomal subunit protein bL19 (118 aa).

It belongs to the bacterial ribosomal protein bL19 family.

Its function is as follows. This protein is located at the 30S-50S ribosomal subunit interface and may play a role in the structure and function of the aminoacyl-tRNA binding site. This Wolinella succinogenes (strain ATCC 29543 / DSM 1740 / CCUG 13145 / JCM 31913 / LMG 7466 / NCTC 11488 / FDC 602W) (Vibrio succinogenes) protein is Large ribosomal subunit protein bL19.